The chain runs to 209 residues: Claudin-4 (209 aa).

Residues 1 to 9 (MASMGLQVM) lie on the Cytoplasmic side of the membrane. An interaction with EPHA2 region spans residues 1 to 103 (MASMGLQVMG…GVLLSVVGGK (103 aa)). Residues 10 to 30 (GIALAVLGWLGAILSCALPMW) traverse the membrane as a helical segment. The Extracellular portion of the chain corresponds to 31–81 (RVTAFIGSNIVTSQTIWEGLWMNCVVQSTGQMQCKVYDSLLALPQDLQAAR). An intrachain disulfide couples Cys-54 to Cys-64. The chain crosses the membrane as a helical span at residues 82-102 (ALIVICIILAVFGVLLSVVGG). Residues 103-117 (KCTNCVDDESSKAKI) lie on the Cytoplasmic side of the membrane. A helical transmembrane segment spans residues 118–138 (MIVAGVVFLLAGLLVMVPVSW). The Extracellular segment spans residues 139–160 (TANNVIRDFYNPLVASGQKREM). Residues 161-181 (GASLYVGWAAAGLLILGGALL) traverse the membrane as a helical segment. Residues 182 to 209 (CFNCPPRNDKPYSAKYSAARSAPASNYV) lie on the Cytoplasmic side of the membrane. Tyr-208 is modified (phosphotyrosine; by EPHA2). The interval 208–209 (YV) is interactions with TJP1, TJP2 and TJP3.

Belongs to the claudin family. In terms of assembly, interacts with EPHA2; phosphorylates CLDN4 and may regulate tight junctions. Directly interacts with TJP1/ZO-1, TJP2/ZO-2 and TJP3/ZO-3. Interacts with CLDN1. Interacts with CLDN8. Post-translationally, phosphorylated. Phosphorylation by EPHA2 is stimulated by EFNA1 and alters interaction with TJP1.

The protein resides in the cell junction. It is found in the tight junction. Its subcellular location is the cell membrane. Functionally, channel-forming tight junction protein that mediates paracellular chloride transport in the kidney. Plays a critical role in the paracellular reabsorption of filtered chloride in the kidney collecting ducts. Claudins play a major role in tight junction-specific obliteration of the intercellular space, through calcium-independent cell-adhesion activity. The protein is Claudin-4 (CLDN4) of Bos taurus (Bovine).